Reading from the N-terminus, the 299-residue chain is Cold shock protein 1 (299 aa).

N-acetylalanine is present on alanine 2. Residues 12-76 (TGKVNWFNAS…GKTKAVNVTA (65 aa)) enclose the CSD domain. The tract at residues 76–97 (APGGGSLKKENNSRGNGARRGG) is disordered. 7 consecutive CCHC-type zinc fingers follow at residues 100–117 (SGCYNCGELGHISKDCGI), 132–149 (EGCYNCGDTGHFARDCTS), 164–181 (DGCYTCGDVGHVARDCTQ), 198–215 (DGCYTCGDVGHFARDCTQ), 230–247 (GTCYSCGGVGHIARDCAT), 253–270 (RGCYQCGGSGHLARDCDQ), and 280–297 (NACYKCGKEGHFARECSS).

This sequence belongs to the cold shock protein (CSP) family. In terms of tissue distribution, mostly expressed in shoot apices and siliques, and, to a lower extent, in roots, cotyledons, stems, shoots, leaves, floral buds and flowers.

It is found in the nucleus. The protein resides in the cytoplasm. Functionally, chaperone that binds to RNA, single- (ssDNA) and double-stranded (dsDNA) DNA, and unwinds nucleic acid duplex. Exhibits a DNA melting activity. May be involved in cold resistance. Prevents seed germination under dehydration or salt stress conditions. This Arabidopsis thaliana (Mouse-ear cress) protein is Cold shock protein 1 (CSP1).